We begin with the raw amino-acid sequence, 518 residues long: Sensor protein kinase HptS (518 aa).

A run of 2 helical transmembrane segments spans residues 20–40 (IFPVFLVIIIGLVSFYAIYIW) and 222–242 (GITLLIVMAVVLVLLVIFGFI). Residues 297 to 513 (EQLIHSIEHT…LICYKIPLSR (217 aa)) form the Histidine kinase domain. His325 carries the post-translational modification Phosphohistidine; by autocatalysis.

Autophosphorylated.

It is found in the cell membrane. It catalyses the reaction ATP + protein L-histidine = ADP + protein N-phospho-L-histidine.. Its function is as follows. Member of the two-component regulatory system HptS/HptR that regulates genes involved in hexose phosphate transport system in response to changes in extracellular phosphate sources. May act as a sensor protein kinase which is autophosphorylated at a histidine residue and transfers its phosphate group to the conserved aspartic acid residue in the regulatory domain of HptS. In turn, HptS antagonizes CcpA-dependent transcription of a subset of CcpA-regulated genes involved in antibiotic susceptibility. This chain is Sensor protein kinase HptS (hptS), found in Staphylococcus aureus (strain MSSA476).